A 186-amino-acid chain; its full sequence is ADP-ribosylation factor-like protein 6 (186 aa).

The N-myristoyl glycine moiety is linked to residue Gly-2. GTP-binding positions include Gly-24–Thr-31, Thr-50, Asp-69–Gln-73, Gly-72, Asn-130–Asp-133, and Ala-164. Mg(2+) contacts are provided by Thr-31 and Thr-50.

Belongs to the small GTPase superfamily. Arf family. In terms of assembly, interacts with SEC61B, ARL6IP1, ARL6IP2, ARL6IP3, ARL6IP4 ARL6IP5 and ARL6IP6. Interacts (GTP-bound form) with the BBSome a complex that contains BBS1, BBS2, BBS4, BBS5, BBS7, BBS8/TTC8, BBS9 and BBIP10. Interacts (GTP-free form) with IFT27.

It localises to the cell projection. Its subcellular location is the cilium membrane. The protein localises to the cytoplasm. The protein resides in the cytoskeleton. It is found in the cilium axoneme. It localises to the cilium basal body. Its function is as follows. Involved in membrane protein trafficking at the base of the ciliary organelle. Mediates recruitment onto plasma membrane of the BBSome complex which would constitute a coat complex required for sorting of specific membrane proteins to the primary cilia. Together with BBS1, is necessary for correct trafficking of PKD1 to primary cilia. Together with the BBSome complex and LTZL1, controls SMO ciliary trafficking and contributes to the sonic hedgehog (SHH) pathway regulation. May regulate cilia assembly and disassembly and subsequent ciliary signaling events such as the Wnt signaling cascade. Isoform 2 may be required for proper retinal function and organization. The chain is ADP-ribosylation factor-like protein 6 (ARL6) from Homo sapiens (Human).